Here is a 260-residue protein sequence, read N- to C-terminus: Alpha carbonic anhydrase 6 (260 aa).

The signal sequence occupies residues 1-28 (MDANTKTILFFVVFFIDLFSPNILFVYA). The Alpha-carbonic anhydrase domain occupies 35 to 260 (PLFTYKQKTE…FVFVFWCMLM (226 aa)). Cysteine 60 and cysteine 215 are disulfide-bonded. Histidine 100 acts as the Proton acceptor in catalysis. Zn(2+) contacts are provided by histidine 126 and histidine 128. The N-linked (GlcNAc...) asparagine glycan is linked to asparagine 136. Histidine 145 lines the Zn(2+) pocket. 211–212 (TI) provides a ligand contact to substrate.

The protein belongs to the alpha-class carbonic anhydrase family. Zn(2+) is required as a cofactor. In terms of processing, N-glycosylated.

The protein localises to the plastid. The protein resides in the chloroplast stroma. It catalyses the reaction hydrogencarbonate + H(+) = CO2 + H2O. In terms of biological role, reversible hydration of carbon dioxide. This chain is Alpha carbonic anhydrase 6 (ACA6), found in Arabidopsis thaliana (Mouse-ear cress).